An 831-amino-acid polypeptide reads, in one-letter code: Serine/threonine-protein kinase ATG1 (831 aa).

Residues 21–321 (YSVEKEIGKG…FTDFFNNEVV (301 aa)) form the Protein kinase domain. ATP contacts are provided by residues 27–35 (IGKGSFAVV) and Lys50. Asp168 functions as the Proton acceptor in the catalytic mechanism. 2 stretches are compositionally biased toward polar residues: residues 360–382 (QQES…TGVR) and 405–419 (NSQN…ASQK). The segment at 360-419 (QQESAHIPPTQTDENTSVQTGVRRTSGKERLATNHPPHQQIHPEDNSQNPEQSYQSASQK) is disordered.

Belongs to the protein kinase superfamily. Ser/Thr protein kinase family. APG1/unc-51/ULK1 subfamily. Homodimer. Forms a ternary complex with ATG13 and ATG17.

It localises to the cytoplasm. The protein resides in the preautophagosomal structure membrane. It carries out the reaction L-seryl-[protein] + ATP = O-phospho-L-seryl-[protein] + ADP + H(+). It catalyses the reaction L-threonyl-[protein] + ATP = O-phospho-L-threonyl-[protein] + ADP + H(+). Functionally, serine/threonine protein kinase involved in the cytoplasm to vacuole transport (Cvt) and found to be essential in autophagy, where it is required for the formation of autophagosomes. Involved in the clearance of protein aggregates which cannot be efficiently cleared by the proteasome. Required for selective autophagic degradation of the nucleus (nucleophagy) as well as for mitophagy which contributes to regulate mitochondrial quantity and quality by eliminating the mitochondria to a basal level to fulfill cellular energy requirements and preventing excess ROS production. Also involved in endoplasmic reticulum-specific autophagic process, in selective removal of ER-associated degradation (ERAD) substrates. Plays a key role in ATG9 and ATG23 cycling through the pre-autophagosomal structure and is necessary to promote ATG18 binding to ATG9 through phosphorylation of ATG9. Catalyzes phosphorylation of ATG4, decreasing the interaction between ATG4 and ATG8 and impairing deconjugation of PE-conjugated forms of ATG8. This Kluyveromyces lactis (strain ATCC 8585 / CBS 2359 / DSM 70799 / NBRC 1267 / NRRL Y-1140 / WM37) (Yeast) protein is Serine/threonine-protein kinase ATG1.